We begin with the raw amino-acid sequence, 369 residues long: 3 beta-hydroxysteroid dehydrogenase type 7 (369 aa).

Y159 functions as the Proton acceptor in the catalytic mechanism. NAD(+) is bound at residue K163. The next 2 membrane-spanning stretches (helical) occupy residues 289–309 (LLPY…QWLL) and 311–331 (PLVL…NTTF).

It belongs to the 3-beta-HSD family.

It localises to the endoplasmic reticulum membrane. The enzyme catalyses 7alpha-hydroxycholesterol + NAD(+) = 7alpha-hydroxycholest-4-en-3-one + NADH + H(+). The catalysed reaction is 7alpha,25-dihydroxycholesterol + NAD(+) = 7alpha,25-dihydroxy-4-cholesten-3-one + NADH + H(+). It carries out the reaction (25R)-cholest-5-en-3beta,7alpha,26-triol + NAD(+) = (25R)-7alpha,26-dihydroxycholest-4-en-3-one + NADH + H(+). It catalyses the reaction (24S)-7alpha-dihydroxycholesterol + NAD(+) = (24S)-7alpha,24-dihydroxycholest-4-en-3-one + NADH + H(+). Its pathway is lipid metabolism; steroid biosynthesis. The 3-beta-HSD enzymatic system plays a crucial role in the biosynthesis of all classes of hormonal steroids. HSD VII is active against four 7-alpha-hydroxylated sterols. Does not metabolize several different C(19/21) steroids as substrates. Involved in bile acid synthesis. Plays a key role in cell positioning and movement in lymphoid tissues by mediating degradation of 7-alpha,25-dihydroxycholesterol (7-alpha,25-OHC): 7-alpha,25-OHC acts as a ligand for the G protein-coupled receptor GPR183/EBI2, a chemotactic receptor for a number of lymphoid cells. The polypeptide is 3 beta-hydroxysteroid dehydrogenase type 7 (Homo sapiens (Human)).